We begin with the raw amino-acid sequence, 88 residues long: Small ribosomal subunit protein uS15 (88 aa).

Belongs to the universal ribosomal protein uS15 family. In terms of assembly, part of the 30S ribosomal subunit. Forms a bridge to the 50S subunit in the 70S ribosome, contacting the 23S rRNA.

Its function is as follows. One of the primary rRNA binding proteins, it binds directly to 16S rRNA where it helps nucleate assembly of the platform of the 30S subunit by binding and bridging several RNA helices of the 16S rRNA. Functionally, forms an intersubunit bridge (bridge B4) with the 23S rRNA of the 50S subunit in the ribosome. This chain is Small ribosomal subunit protein uS15, found in Borrelia turicatae (strain 91E135).